A 183-amino-acid polypeptide reads, in one-letter code: CASP-like protein UU2 (183 aa).

At 1-33 (MEESQQQSSKFDAPPSPYVPSRVYLAQIYWKKP) the chain is on the cytoplasmic side. Residues 34-54 (AIVVLRVLQFIFSLIAFSVMA) traverse the membrane as a helical segment. The Extracellular portion of the chain corresponds to 55–72 (DVLHDVQGSIKSLSYTVA). The chain crosses the membrane as a helical span at residues 73-93 (IGVLACAYALAQLSFSLWCVI). Over 94–118 (RGATSSAGVTPLYQYATFICDQMST) the chain is Cytoplasmic. The chain crosses the membrane as a helical span at residues 119–139 (YFLISAASATATLIDVSGVCG). At 140–156 (SNGSGTNLCSRSTASVT) the chain is on the extracellular side. N-linked (GlcNAc...) asparagine glycosylation occurs at Asn-141. A helical membrane pass occupies residues 157-177 (FAFLAFLAFSASSVLTGYYLV). Over 178-183 (KCILKA) the chain is Cytoplasmic.

It belongs to the Casparian strip membrane proteins (CASP) family. As to quaternary structure, homodimer and heterodimers.

The protein resides in the cell membrane. The sequence is that of CASP-like protein UU2 from Selaginella moellendorffii (Spikemoss).